We begin with the raw amino-acid sequence, 437 residues long: Protein WVD2-like 5 (437 aa).

Disordered regions lie at residues 1–22 (MDPE…GGLA), 38–210 (TVDT…FSFK), and 254–437 (LRKS…AVEH). Over residues 41–55 (TTSESQNENSANSST) the composition is skewed to low complexity. Residues 58-86 (TIEHVKEAAEGTQVEHVDDSKCMKGEKAQ) are compositionally biased toward basic and acidic residues. The segment covering 121 to 140 (SNGSVAPNVQTTNPLKSKSF) has biased composition (polar residues). A compositionally biased stretch (basic and acidic residues) spans 151 to 167 (GKHDSAPAESADGEKVK). Residue Ser-208 is modified to Phosphoserine. Basic residues predominate over residues 288–297 (KSPKLGRKKT). Residues 360-371 (PAPAKAAIIPAK) are compositionally biased toward low complexity. A compositionally biased stretch (basic and acidic residues) spans 408–437 (EDSHETVSPRMNEDRADKSIEVSEAVAVEH). At Ser-415 the chain carries Phosphoserine.

It belongs to the TPX2 family. In terms of tissue distribution, expressed in seedlings.

It is found in the cytoplasm. The protein resides in the cytoskeleton. In terms of biological role, microtubule-associated protein (MAP) that regulates the orientation of interphase cortical microtubules. This is Protein WVD2-like 5 from Arabidopsis thaliana (Mouse-ear cress).